The primary structure comprises 704 residues: Elongation factor G 2 (704 aa).

Residues 8–290 enclose the tr-type G domain; it reads ERYRNIGISA…AIIDYLPSPV (283 aa). GTP is bound by residues 17–24, 88–92, and 142–145; these read AHIDAGKT, DTPGH, and NKMD.

The protein belongs to the TRAFAC class translation factor GTPase superfamily. Classic translation factor GTPase family. EF-G/EF-2 subfamily.

Its subcellular location is the cytoplasm. Functionally, catalyzes the GTP-dependent ribosomal translocation step during translation elongation. During this step, the ribosome changes from the pre-translocational (PRE) to the post-translocational (POST) state as the newly formed A-site-bound peptidyl-tRNA and P-site-bound deacylated tRNA move to the P and E sites, respectively. Catalyzes the coordinated movement of the two tRNA molecules, the mRNA and conformational changes in the ribosome. The chain is Elongation factor G 2 from Polaromonas sp. (strain JS666 / ATCC BAA-500).